The chain runs to 84 residues: Dolichol phosphate-mannose biosynthesis regulatory protein (84 aa).

2 helical membrane-spanning segments follow: residues 11–31 and 49–69; these read FGLV…VILL and YAVL…GLFI.

The protein belongs to the DPM2 family. In terms of assembly, component of the dolichol-phosphate mannose (DPM) synthase complex composed of DPM1, DPM2 and DPM3; in the complex interacts directly with DPM3. Component of the glycosylphosphatidylinositol-N-acetylglucosaminyltransferase (GPI-GnT) complex composed at least by PIGA, PIGC, PIGH, PIGP, PIGQ, PIGY and DPM2. Interacts with PIGA, PIGC and PIGQ.

The protein localises to the endoplasmic reticulum membrane. Its pathway is protein modification; protein glycosylation. Functionally, regulates the biosynthesis of dolichol phosphate-mannose. Regulatory subunit of the dolichol-phosphate mannose (DPM) synthase complex; essential for the ER localization and stable expression of DPM1. Part of the glycosylphosphatidylinositol-N-acetylglucosaminyltransferase (GPI-GnT) complex that catalyzes the transfer of N-acetylglucosamine from UDP-N-acetylglucosamine to phosphatidylinositol and participates in the first step of GPI biosynthesis. May act by regulating the GPI-GNT complex. The protein is Dolichol phosphate-mannose biosynthesis regulatory protein of Mus musculus (Mouse).